The primary structure comprises 45 residues: Somatoliberin (45 aa).

Belongs to the glucagon family.

Its subcellular location is the secreted. Its function is as follows. GRF is released by the hypothalamus and acts on the adenohypophyse to stimulate the secretion of growth hormone. The chain is Somatoliberin (ghrh) from Cyprinus carpio (Common carp).